The primary structure comprises 1976 residues: Putative callose synthase 8 (1976 aa).

Residues 1–530 (MSHEIVPVDP…FWQIFRSFDR (530 aa)) lie on the Cytoplasmic side of the membrane. A helical membrane pass occupies residues 531–551 (MWSFFVLSLQALIIMACHDVG). The Extracellular portion of the chain corresponds to 552–565 (SPLQVFNANIFEDV). Residues 566–586 (MSIFITSAILKLIKGILDIIF) form a helical membrane-spanning segment. The Cytoplasmic portion of the chain corresponds to 587 to 602 (KWKARNTMPINEKKKR). Residues 603 to 623 (LVKLGFAAMWTIILPVLYSHS) form a helical membrane-spanning segment. Over 624 to 648 (RRKYICYFTNYKTWLGEWCFSPYMV) the chain is Extracellular. A helical transmembrane segment spans residues 649 to 669 (AVTIYLTGSAIELVLFFVPAI). Residues 670–707 (SKYIETSNHGIFKTLSWWGQPRLYVGRGMQETQVSQFK) are Cytoplasmic-facing. A helical membrane pass occupies residues 708 to 728 (YTFFWILVLLTKFAFSYAFEI). Over 729–759 (KPLIEPTRLIMKVGVRNYEWHEIFPEVKSNA) the chain is Extracellular. Residues 760-780 (AAIVAVWAPIMVVYFMDTQIW) form a helical membrane-spanning segment. The Cytoplasmic portion of the chain corresponds to 781–1544 (YSVYCTIFGG…FDFFRMLSCY (764 aa)). The helical transmembrane segment at 1545–1565 (FTTIGFYFSSLISVIGIYIYL) threads the bilayer. Over 1566 to 1595 (YGQLYLVLSGLQKTLILEAKVKNIKSLETA) the chain is Extracellular. A helical membrane pass occupies residues 1596–1616 (LASQSFIQLGLLTGLPMVMEI). At 1617-1620 (GLEK) the chain is on the cytoplasmic side. A helical membrane pass occupies residues 1621–1641 (GFLIAFQDFILMQLQLAAFFF). Over 1642-1688 (TFSLGTKTHYFGRTILHGGAKYRPTGRKVVVFHANFSENYRLYSRSH) the chain is Extracellular. N-linked (GlcNAc...) asparagine glycosylation occurs at Asn1676. Residues 1689-1709 (FIKGFELMILLVVYELFKHTS) form a helical membrane-spanning segment. Residues 1710–1715 (QSNMAY) are Cytoplasmic-facing. The helical transmembrane segment at 1716–1736 (SFITFSVWFMSFTWLCAPFLF) threads the bilayer. The Extracellular portion of the chain corresponds to 1737–1790 (NPSGFTWEIIVGDWRDWNRWIKEQGGIGIQQDKSWQSWWNDEQAHLRGSGVGAR). The helical transmembrane segment at 1791–1811 (CLEIILSLRFFVYQYGLVYHL) threads the bilayer. The Cytoplasmic segment spans residues 1812–1819 (DITQSNTN). Residues 1820–1840 (IIVYALSWVVILATFFTVKAV) form a helical membrane-spanning segment. Residues 1841–1856 (DLGRQLFSTRKHLVFR) are Extracellular-facing. The chain crosses the membrane as a helical span at residues 1857 to 1877 (FFKVFVFVSILTIIITLANIC). At 1878 to 1884 (HLSVKDL) the chain is on the cytoplasmic side. Residues 1885 to 1905 (LVSCLAFLPTGWGLILIAQAV) form a helical membrane-spanning segment. At 1906–1928 (RPKIEGTSLWEFTQVLARAYDYG) the chain is on the extracellular side. Residues 1929 to 1949 (MGVVLFAPMAILAWLPIISAF) traverse the membrane as a helical segment. The Cytoplasmic portion of the chain corresponds to 1950–1976 (QTRFLFNEAFNRRLQIQPILAGKKKNR).

This sequence belongs to the glycosyltransferase 48 family.

The protein localises to the cell membrane. It catalyses the reaction [(1-&gt;3)-beta-D-glucosyl](n) + UDP-alpha-D-glucose = [(1-&gt;3)-beta-D-glucosyl](n+1) + UDP + H(+). Involved in callose synthesis at the forming cell plate during cytokinesis. During plant growth and development, callose is found as a transitory component of the cell plate in dividing cells, is a major component of pollen mother cell walls and pollen tubes, and is found as a structural component of plasmodesmatal canals. This Arabidopsis thaliana (Mouse-ear cress) protein is Putative callose synthase 8 (CALS8).